Reading from the N-terminus, the 425-residue chain is Histone-binding protein RBBP4-A (425 aa).

At Ala-2 the chain carries N-acetylalanine. WD repeat units follow at residues 32–125 (YDLV…THDG), 126–175 (EVNR…RLRG), 176–223 (HQKE…KTIF), 225–270 (GHTA…HSVD), 271–314 (AHTA…HSFE), 315–371 (SHKD…FIHG), and 372–404 (GHTA…VWQM).

It belongs to the WD repeat RBAP46/RBAP48/MSI1 family. As to quaternary structure, binds directly to histone H4, probably via helix 1 of the histone fold, a region that is not accessible when histone H4 is in chromatin. Probably forms a large corepressor complex that contains ncor1, sin3a, hdac1-A and/or hdac1-B, hdac2, rbbp4-A and/or rbbp4-B and possibly rbbp7.

It localises to the nucleus. It is found in the chromosome. The protein localises to the telomere. Functionally, core histone-binding subunit that may target chromatin assembly factors, chromatin remodeling factors and histone deacetylases to their histone substrates in a manner that is regulated by nucleosomal DNA. Component of several complexes which regulate chromatin metabolism. The sequence is that of Histone-binding protein RBBP4-A (rbbp4-a) from Xenopus laevis (African clawed frog).